The chain runs to 309 residues: Probable cell division protein kinase ECU11_1290 (309 aa).

A Protein kinase domain is found at 4–288 (YENIKQVGEG…VISSHKNTYI (285 aa)). Residues 10-18 (VGEGAFGQV) and K33 contribute to the ATP site. D124 serves as the catalytic Proton acceptor.

It belongs to the protein kinase superfamily. CMGC Ser/Thr protein kinase family. CDC2/CDKX subfamily.

It is found in the nucleus. It catalyses the reaction L-seryl-[protein] + ATP = O-phospho-L-seryl-[protein] + ADP + H(+). The catalysed reaction is L-threonyl-[protein] + ATP = O-phospho-L-threonyl-[protein] + ADP + H(+). Its function is as follows. May play a role in the control of the eukaryotic cell cycle. In Encephalitozoon cuniculi (strain GB-M1) (Microsporidian parasite), this protein is Probable cell division protein kinase ECU11_1290.